Here is a 756-residue protein sequence, read N- to C-terminus: 1,4-alpha-glucan branching enzyme GlgB (756 aa).

The active-site Nucleophile is the aspartate 431. Residue glutamate 484 is the Proton donor of the active site.

It belongs to the glycosyl hydrolase 13 family. GlgB subfamily. Monomer.

The enzyme catalyses Transfers a segment of a (1-&gt;4)-alpha-D-glucan chain to a primary hydroxy group in a similar glucan chain.. The protein operates within glycan biosynthesis; glycogen biosynthesis. Catalyzes the formation of the alpha-1,6-glucosidic linkages in glycogen by scission of a 1,4-alpha-linked oligosaccharide from growing alpha-1,4-glucan chains and the subsequent attachment of the oligosaccharide to the alpha-1,6 position. The chain is 1,4-alpha-glucan branching enzyme GlgB from Prochlorococcus marinus (strain MIT 9303).